Reading from the N-terminus, the 313-residue chain is Probable F-box protein At3g44130 (313 aa).

Positions 1 to 46 (MASGNLPWELEEEILCRLPLGSLVRLRSVCKHWNDFFNDKWFIKKS) constitute an F-box domain.

The polypeptide is Probable F-box protein At3g44130 (Arabidopsis thaliana (Mouse-ear cress)).